Consider the following 361-residue polypeptide: Chorismate synthase (361 aa).

Residues Arg48 and Arg54 each contribute to the NADP(+) site. FMN-binding positions include Arg125–Ser127, Asn238–Ala239, Gly278, Lys293–Ser297, and Arg319.

It belongs to the chorismate synthase family. Homotetramer. It depends on FMNH2 as a cofactor.

The catalysed reaction is 5-O-(1-carboxyvinyl)-3-phosphoshikimate = chorismate + phosphate. It participates in metabolic intermediate biosynthesis; chorismate biosynthesis; chorismate from D-erythrose 4-phosphate and phosphoenolpyruvate: step 7/7. Its function is as follows. Catalyzes the anti-1,4-elimination of the C-3 phosphate and the C-6 proR hydrogen from 5-enolpyruvylshikimate-3-phosphate (EPSP) to yield chorismate, which is the branch point compound that serves as the starting substrate for the three terminal pathways of aromatic amino acid biosynthesis. This reaction introduces a second double bond into the aromatic ring system. This Salmonella typhi protein is Chorismate synthase.